A 490-amino-acid chain; its full sequence is MRPAFALCLLWQALWPGPGGGEHPTADRAGCSASGACYSLHHATMKRQAAEEACILRGGALSTVRAGAELRAVLALLRAGPGPGGGSKDLLFWVALERRRSHCTLENEPLRGFSWLSSDPGGLESDTLQWVEEPQRSCTARRCAVLQATGGVEPAGWKEMRCHLRANGYLCKYQFEVLCPAPRPGAASNLSYRAPFQLHSAALDFSPPGTEVSALCRGQLPISVTCIADEIGARWDKLSGDVLCPCPGRYLRAGKCAELPNCLDDLGGFACECATGFELGKDGRSCVTSGEGQPTLGGTGVPTRRPPATATSPVPQRTWPIRVDEKLGETPLVPEQDNSVTSIPEIPRWGSQSTMSTLQMSLQAESKATITPSGSVISKFNSTTSSATPQAFDSSSAVVFIFVSTAVVVLVILTMTVLGLVKLCFHESPSSQPRKESMGPPGLESDPEPAALGSSSAHCTNNGVKVGDCDLRDRAEGALLAESPLGSSDA.

Residues 1 to 21 form the signal peptide; sequence MRPAFALCLLWQALWPGPGGG. The Extracellular portion of the chain corresponds to 22–397; it reads EHPTADRAGC…TPQAFDSSSA (376 aa). Residues 33 to 173 enclose the C-type lectin domain; it reads ASGACYSLHH…LRANGYLCKY (141 aa). Cys-143 and Cys-162 are disulfide-bonded. N-linked (GlcNAc...) asparagine glycosylation is present at Asn-189. Residues 245–287 enclose the EGF-like domain; sequence PCPGRYLRAGKCAELPNCLDDLGGFACECATGFELGKDGRSCV. A disordered region spans residues 286–349; sequence CVTSGEGQPT…VTSIPEIPRW (64 aa). Positions 301–315 are enriched in low complexity; it reads VPTRRPPATATSPVP. A glycan (N-linked (GlcNAc...) asparagine) is linked at Asn-381. A helical membrane pass occupies residues 398 to 418; that stretch reads VVFIFVSTAVVVLVILTMTVL. Topologically, residues 419–490 are cytoplasmic; it reads GLVKLCFHES…AESPLGSSDA (72 aa). The tract at residues 428-461 is disordered; sequence SPSSQPRKESMGPPGLESDPEPAALGSSSAHCTN.

The protein resides in the membrane. The chain is C-type lectin domain family 14 member A (CLEC14A) from Homo sapiens (Human).